We begin with the raw amino-acid sequence, 356 residues long: Tyrosine recombinase XerS (356 aa).

The region spanning 16 to 121 (IMPWFVLDYY…ALSSLYKYLT (106 aa)) is the Core-binding (CB) domain. The Tyr recombinase domain occupies 169–354 (EFLDYVDCEY…VNDEQKNALD (186 aa)). Active-site residues include Arg210, Lys234, His306, Arg309, and His332. The O-(3'-phospho-DNA)-tyrosine intermediate role is filled by Tyr341.

Belongs to the 'phage' integrase family. XerS subfamily.

It is found in the cytoplasm. With respect to regulation, ftsK is required for recombination. Site-specific tyrosine recombinase, which acts by catalyzing the cutting and rejoining of the recombining DNA molecules. Essential to convert dimers of the bacterial chromosome into monomers to permit their segregation at cell division. This Streptococcus uberis (strain ATCC BAA-854 / 0140J) protein is Tyrosine recombinase XerS.